The primary structure comprises 351 residues: Cyanuric acid amidohydrolase (351 aa).

The tract at residues 1 to 96 (MPSLRAHVFR…HWTVFARETV (96 aa)) is RU A. Substrate contacts are provided by residues R53 and 77 to 78 (SG). The tract at residues 103-240 (ALAIGVSRTP…HEIIVLGMSA (138 aa)) is RU B. The active site involves K153. Substrate is bound by residues R185 and 223–224 (SS). The active-site Nucleophile is the S223. An RU C region spans residues 246 to 351 (LSIDHAVMLD…PVAIIVEKEQ (106 aa)). E283 contributes to the Mg(2+) binding site. Substrate is bound by residues R310 and 329–330 (SG). A332, Q335, G336, P337, and G340 together coordinate Mg(2+).

This sequence belongs to the cyclic amide hydrolase (CyAH) family. Homotetramer.

The catalysed reaction is cyanurate + H2O = 1-carboxybiuret + H(+). Its pathway is xenobiotic degradation; atrazine degradation; biuret from cyanurate: step 1/1. Inhibited by barbituric acid. Responsible for the hydrolysis of cyanuric acid, an intermediate formed during catabolism of s-triazine based compounds in herbicides such as atrazine and polymers such as melamine. Catalyzes the hydrolytic opening of the s-triazine ring of cyanuric acid (2,4,6-trihydroxy-s-triazine) to yield carbon dioxide and carboxybiuret, which spontaneously decarboxylates to biuret. This is Cyanuric acid amidohydrolase from Rhizobium leguminosarum bv. trifolii (strain WSM1325).